Consider the following 933-residue polypeptide: MTELKAKGPRAPHVAGGPPSPEVGSPLLCRPAAGPFPGSQTSDTLPEVSAIPISLDGLLFPRPCQGQDPSNEKTQDQQSLSDVEGAYSRAEATRGAGGSSSSPPEKDSGLLDSVLDTLLAPSGPGQSQPSPPACEVTSSWCLFGPELPEDPPAAPATQGVLSPLMSRSGCKAGDSSGTAAAHKVLPRGLSPSRQLLLPASGSPHWSGAPVKPSPQPAAVEVEEEDGSESEESAGPLLKGKPRALGGAAAGGGAAAVPPGAAAGGVALVPKEDSRFSAPRVALVEQDAPMAPXRSPLATTMMDFIHVPILPLNHALLAARTRQLLEDESYDGGAGAXSAFAPPRSSPSASSTPVAVGDFPDCAYPPDAEPKDDAYPLYSDFQPPALKIKEEEEGAEASARSPRSYLVAGANPAAFPDFPLGPPPPLPPRAPPSRPGEAAVTAAPASASVSSASSSGSTLECILYKAEGAPPQQGPFAPPPCKAPGASGCLLPRDGLPSTSASAAAAGAAPALYPALGLNGLPQLGYQAAVLKEGLPQVYPPYLNYLRPDSEASQSPQYSFESLPQKICLICGDEASGCHYGVLTCGSCKVFFKRAMEGQHNYLCAGRNDCIVDKIRRKNCPACRLRKCCQAGMVLGGRKFKKFNKVRVVRALDAVALPQPVGIPNESQALSQRFTFSPGQDIQLIPPLINLLMSIEPDVIYAGHDNTKPDTSSSLLTSLNQLGERQLLSVVKWSKSLPGFRNLHIDDQITLIQYSWMSLMVFGLGWRSYKHVSGQMLYFAPDLILNEQRMKESSFYSLCLTMWQIPQEFVKLQVSQEEFLCMKVLLLLNTIPLEGLRSQTQFEEMRSSYIRELIKAIGLRQKGVVSSSQRFYQLTKLLDNLHDLVKQLHLYCLNTFIQSRALSVEFPEMMSEVIAAQLPKILAGMVKPLLFHKK.

Residues methionine 1–leucine 164 form an AF3; mediates transcriptional activation region. The disordered stretch occupies residues methionine 1 to valine 256. The tract at residues methionine 1–isoleucine 566 is modulating, Pro-Rich. The residue at position 20 (serine 20) is a Phosphoserine. Positions leucine 55 to leucine 59 match the LXXL motif 1 motif. Serine 81 is subject to Phosphoserine. The LXXL motif 2 motif lies at leucine 115–leucine 119. Residues serine 130 and serine 162 each carry the phosphoserine modification. Residues methionine 165 to histidine 305 are mediates transcriptional transrepression. The short motif at lysine 183–arginine 187 is the Nuclear localization signal element. A phosphoserine mark is found at serine 190 and serine 213. The span at glutamate 220–glutamate 231 shows a compositional bias: acidic residues. A compositionally biased stretch (low complexity) spans serine 232–glycine 246. At serine 294 the chain carries Phosphoserine; by MAPK1. The span at alanine 335–glycine 356 shows a compositional bias: low complexity. Residues alanine 335–serine 378 are disordered. Serine 345 is subject to Phosphoserine; by MAPK. Lysine 388 is covalently cross-linked (Glycyl lysine isopeptide (Lys-Gly) (interchain with G-Cter in SUMO); alternate). Residue lysine 388 forms a Glycyl lysine isopeptide (Lys-Gly) (interchain with G-Cter in ubiquitin); alternate linkage. Serine 400 is modified (phosphoserine; by CDK2). The segment at proline 415–serine 452 is disordered. The segment covering proline 418–arginine 433 has biased composition (pro residues). The segment covering proline 434–serine 452 has biased composition (low complexity). Residues serine 456–arginine 546 form an AF1; mediates transcriptional activation region. Lysine 531 is covalently cross-linked (Glycyl lysine isopeptide (Lys-Gly) (interchain with G-Cter in SUMO)). 2 NR C4-type zinc fingers span residues cysteine 567–cysteine 587 and cysteine 603–cysteine 627. Positions cysteine 567 to phenylalanine 639 form a DNA-binding region, nuclear receptor. Phosphoserine is present on serine 676. An NR LBD domain is found at glutamine 679 to isoleucine 913. The AF2; mediates transcriptional activation stretch occupies residues leucine 687–lysine 933. Residue arginine 766 coordinates progesterone.

Belongs to the nuclear hormone receptor family. As to quaternary structure, interacts with SMARD1 and UNC45A. Interacts with CUEDC2; the interaction promotes ubiquitination, decreases sumoylation, and represses transcriptional activity. Interacts with PIAS3; the interaction promotes sumoylation of PR in a hormone-dependent manner, inhibits DNA-binding, and alters nuclear export. Interacts with SP1; the interaction requires ligand-induced phosphorylation on Ser-345 by ERK1/2-MAPK. Interacts with PRMT2. Interacts with NCOA2 and NCOA1. Interacts with KLF9. Interacts with GTF2B. In terms of processing, phosphorylated on multiple serine sites. Several of these sites are hormone-dependent. Phosphorylation on Ser-294 is highly hormone-dependent and modulates ubiquitination and sumoylation on Lys-388. Phosphorylation on Ser-102 and Ser-345 requires induction by hormone. Basal phosphorylation on Ser-81, Ser-162, Ser-190 and Ser-400 is increased in response to progesterone and can be phosphorylated in vitro by the CDK2-A1 complex. Increased levels of phosphorylation on Ser-400 also in the presence of EGF, heregulin, IGF, PMA and FBS. Phosphorylation at this site by CDK2 is ligand-independent, and increases nuclear translocation and transcriptional activity. Phosphorylation at Ser-162 and Ser-294, but not at Ser-190, is impaired during the G(2)/M phase of the cell cycle. Phosphorylation on Ser-345 by ERK1/2 MAPK is required for interaction with SP1. Post-translationally, sumoylation is hormone-dependent and represses transcriptional activity. Sumoylation on all three sites is enhanced by PIAS3. Desumoylated by SENP1. Sumoylation on Lys-388, the main site of sumoylation, is repressed by ubiquitination on the same site, and modulated by phosphorylation at Ser-294. Ubiquitination is hormone-dependent and represses sumoylation on the same site. Promoted by MAPK-mediated phosphorylation on Ser-294. Ubiquitinated by UBR5, leading to its degradation: UBR5 specifically recognizes and binds ligand-bound PGR when it is not associated with coactivators (NCOAs). In presence of NCOAs, the UBR5-degron is not accessible, preventing its ubiquitination and degradation. In terms of processing, palmitoylated by ZDHHC7 and ZDHHC21. Palmitoylation is required for plasma membrane targeting and for rapid intracellular signaling via ERK and AKT kinases and cAMP generation.

The protein resides in the nucleus. Its subcellular location is the cytoplasm. The steroid hormones and their receptors are involved in the regulation of eukaryotic gene expression and affect cellular proliferation and differentiation in target tissues. Transcriptional activator of several progesteron-dependent promoters in a variety of cell types. Involved in activation of SRC-dependent MAPK signaling on hormone stimulation. The sequence is that of Progesterone receptor (PGR) from Pan troglodytes (Chimpanzee).